We begin with the raw amino-acid sequence, 508 residues long: Steroid 17-alpha-hydroxylase/17,20 lyase (508 aa).

Asn-202 lines the substrate pocket. Cys-442 is a heme binding site.

Belongs to the cytochrome P450 family. Heme is required as a cofactor.

The protein resides in the endoplasmic reticulum membrane. Its subcellular location is the microsome membrane. It catalyses the reaction a C21-steroid + reduced [NADPH--hemoprotein reductase] + O2 = a 17alpha-hydroxy-C21-steroid + oxidized [NADPH--hemoprotein reductase] + H2O + H(+). It carries out the reaction progesterone + reduced [NADPH--hemoprotein reductase] + O2 = 17alpha-hydroxyprogesterone + oxidized [NADPH--hemoprotein reductase] + H2O + H(+). The catalysed reaction is pregnenolone + reduced [NADPH--hemoprotein reductase] + O2 = 17alpha-hydroxypregnenolone + oxidized [NADPH--hemoprotein reductase] + H2O + H(+). The enzyme catalyses 17alpha-hydroxyprogesterone + reduced [NADPH--hemoprotein reductase] + O2 = androst-4-ene-3,17-dione + acetate + oxidized [NADPH--hemoprotein reductase] + H2O + 2 H(+). It catalyses the reaction 17alpha-hydroxyprogesterone + reduced [NADPH--hemoprotein reductase] + O2 = 16alpha,17alpha-dihydroxyprogesterone + oxidized [NADPH--hemoprotein reductase] + H2O + H(+). It carries out the reaction 16alpha,17alpha-dihydroxyprogesterone + reduced [NADPH--hemoprotein reductase] + O2 = 6beta,16alpha,17alpha-trihydroxyprogesterone + oxidized [NADPH--hemoprotein reductase] + H2O + H(+). The catalysed reaction is 17alpha-hydroxypregnenolone + reduced [NADPH--hemoprotein reductase] + O2 = 3beta-hydroxyandrost-5-en-17-one + acetate + oxidized [NADPH--hemoprotein reductase] + H2O + 2 H(+). The enzyme catalyses 16alpha,17alpha-dihydroxypregnenolone + reduced [NADPH--hemoprotein reductase] + O2 = 3beta,16alpha-dihydroxy-androst-5-en-17-one + acetate + oxidized [NADPH--hemoprotein reductase] + H2O + 2 H(+). It catalyses the reaction 3beta-hydroxyandrost-5-en-17-one + reduced [NADPH--hemoprotein reductase] + O2 = 3beta,16alpha-dihydroxy-androst-5-en-17-one + oxidized [NADPH--hemoprotein reductase] + H2O + H(+). It carries out the reaction androst-4-ene-3,17-dione + reduced [NADPH--hemoprotein reductase] + O2 = 16alpha-hydroxyandrost-4-ene-3,17-dione + oxidized [NADPH--hemoprotein reductase] + H2O + H(+). Its pathway is steroid hormone biosynthesis. It functions in the pathway steroid biosynthesis; glucocorticoid biosynthesis. Regulated predominantly by intracellular cAMP levels. The 17,20-lyase activity is stimulated by cytochrome b5, which acts as an allosteric effector increasing the Vmax of the lyase activity. In terms of biological role, a cytochrome P450 monooxygenase involved in corticoid and androgen biosynthesis. Catalyzes 17-alpha hydroxylation of C21 steroids, which is common for both pathways. A second oxidative step, required only for androgen synthesis, involves an acyl-carbon cleavage. The 17-alpha hydroxy intermediates, as part of adrenal glucocorticoids biosynthesis pathway, are precursors of cortisol. Hydroxylates steroid hormones, pregnenolone and progesterone to form 17-alpha hydroxy metabolites, followed by the cleavage of the C17-C20 bond to form C19 steroids, dehydroepiandrosterone (DHEA) and androstenedione. Has 16-alpha hydroxylase activity. Catalyzes 16-alpha hydroxylation of 17-alpha hydroxy pregnenolone, followed by the cleavage of the C17-C20 bond to form 16-alpha-hydroxy DHEA. Also 16-alpha hydroxylates androgens, relevant for estriol synthesis. Mechanistically, uses molecular oxygen inserting one oxygen atom into a substrate, and reducing the second into a water molecule, with two electrons provided by NADPH via cytochrome P450 reductase (CPR; NADPH-ferrihemoprotein reductase). The polypeptide is Steroid 17-alpha-hydroxylase/17,20 lyase (CYP17A1) (Macaca fascicularis (Crab-eating macaque)).